The sequence spans 628 residues: uncharacterized protein (628 aa).

It belongs to the IucA/IucC family.

This is an uncharacterized protein from Sinorhizobium fredii (strain NBRC 101917 / NGR234).